The primary structure comprises 863 residues: Alanine--tRNA ligase (863 aa).

Residues His-552, His-556, Cys-654, and His-658 each coordinate Zn(2+).

Belongs to the class-II aminoacyl-tRNA synthetase family. Zn(2+) is required as a cofactor.

It is found in the cytoplasm. The enzyme catalyses tRNA(Ala) + L-alanine + ATP = L-alanyl-tRNA(Ala) + AMP + diphosphate. Catalyzes the attachment of alanine to tRNA(Ala) in a two-step reaction: alanine is first activated by ATP to form Ala-AMP and then transferred to the acceptor end of tRNA(Ala). Also edits incorrectly charged Ser-tRNA(Ala) and Gly-tRNA(Ala) via its editing domain. The sequence is that of Alanine--tRNA ligase from Nitrosomonas eutropha (strain DSM 101675 / C91 / Nm57).